The primary structure comprises 56 residues: Arcadin-3 (56 aa).

It is found in the cytoplasm. Its subcellular location is the cytoskeleton. Its function is as follows. Part of an actin-like archaeal cytoskeleton. The protein is Arcadin-3 of Pyrobaculum calidifontis (strain DSM 21063 / JCM 11548 / VA1).